Reading from the N-terminus, the 479-residue chain is Sucrose-6-phosphate hydrolase (479 aa).

A disordered region spans residues 1 to 28 (MTAHDQELRRRAYEEVEKKEPIANSDPH). Substrate-binding positions include 40–43 (LLND), glutamine 59, 102–103 (YS), 161–162 (RD), and glutamate 220. Residue aspartate 43 is part of the active site.

This sequence belongs to the glycosyl hydrolase 32 family.

It catalyses the reaction Hydrolysis of terminal non-reducing beta-D-fructofuranoside residues in beta-D-fructofuranosides.. Its pathway is glycan biosynthesis; sucrose metabolism. This chain is Sucrose-6-phosphate hydrolase (sacA), found in Bacillus subtilis (strain 168).